The sequence spans 233 residues: Orotidine 5'-phosphate decarboxylase (233 aa).

Residues Asp9, Lys31, 58–67 (DLKLHDIPNT), Thr120, Arg182, Gln191, Gly211, and Arg212 each bind substrate. The active-site Proton donor is the Lys60.

It belongs to the OMP decarboxylase family. Type 1 subfamily. As to quaternary structure, homodimer.

It catalyses the reaction orotidine 5'-phosphate + H(+) = UMP + CO2. It participates in pyrimidine metabolism; UMP biosynthesis via de novo pathway; UMP from orotate: step 2/2. Catalyzes the decarboxylation of orotidine 5'-monophosphate (OMP) to uridine 5'-monophosphate (UMP). The protein is Orotidine 5'-phosphate decarboxylase of Listeria innocua serovar 6a (strain ATCC BAA-680 / CLIP 11262).